We begin with the raw amino-acid sequence, 171 residues long: MSSKRTKTKTKKRPQRATSNVFAMFDQSQIQEFKEAFNMIDQNRDGFIDKEDLHDMLASLGKNPTDEYLDAMMNEAPGPINFTMFLTMFGEKLNGTDPEDVIRNAFACFDEEATGTIQEDYLRELLTTMGDRFTDEEVDELYREAPIDKKGNFNYIEFTRILKHGAKDKDD.

The residue at position 18 (Thr-18) is a Phosphothreonine; by MLCK. Ser-19 bears the Phosphoserine; by MLCK mark. EF-hand domains are found at residues 28–63, 97–132, and 133–168; these read SQIQ…LGKN, DPED…MGDR, and FTDE…GAKD. Ca(2+) is bound by residues Asp-41, Asn-43, Asp-45, and Asp-52.

As to quaternary structure, myosin is a hexamer of 2 heavy chains and 4 light chains. Phosphorylation increases the actin-activated myosin ATPase activity and thereby regulates the contractile activity. It is required to generate the driving force in the migration of the cells but not necessary for localization of myosin-2 at the leading edge.

Myosin regulatory subunit that plays an important role in regulation of both smooth muscle and nonmuscle cell contractile activity via its phosphorylation. Implicated in cytokinesis, receptor capping, and cell locomotion. The polypeptide is Myosin regulatory light chain 12A (MYL12A) (Homo sapiens (Human)).